A 198-amino-acid polypeptide reads, in one-letter code: Protein-L-isoaspartate O-methyltransferase (198 aa).

Ser-50 is a catalytic residue.

This sequence belongs to the methyltransferase superfamily. L-isoaspartyl/D-aspartyl protein methyltransferase family.

It is found in the cytoplasm. It catalyses the reaction [protein]-L-isoaspartate + S-adenosyl-L-methionine = [protein]-L-isoaspartate alpha-methyl ester + S-adenosyl-L-homocysteine. Its function is as follows. Catalyzes the methyl esterification of L-isoaspartyl residues in peptides and proteins that result from spontaneous decomposition of normal L-aspartyl and L-asparaginyl residues. It plays a role in the repair and/or degradation of damaged proteins. The protein is Protein-L-isoaspartate O-methyltransferase of Thermosipho melanesiensis (strain DSM 12029 / CIP 104789 / BI429).